A 389-amino-acid polypeptide reads, in one-letter code: Choline/ethanolaminephosphotransferase 1 (389 aa).

Residues Val-40 to Thr-60 form a helical membrane-spanning segment. Asn-48 is a CDP-choline binding site. The Mg(2+) site is built by Asp-95 and Asp-98. Arg-103 is a binding site for CDP-choline. Residue Asp-116 participates in Mg(2+) binding. His-117 serves as the catalytic Proton acceptor. Mg(2+) is bound at residue Asp-120. The next 7 helical transmembrane spans lie at Thr-141–Phe-161, Gly-176–Ala-196, Val-221–Val-241, Met-252–Trp-272, Leu-280–Val-300, Ser-322–Leu-344, and Val-350–Ile-370.

This sequence belongs to the CDP-alcohol phosphatidyltransferase class-I family. Mg(2+) is required as a cofactor. Mn(2+) serves as cofactor.

It is found in the membrane. It catalyses the reaction CDP-ethanolamine + a 1,2-diacyl-sn-glycerol = a 1,2-diacyl-sn-glycero-3-phosphoethanolamine + CMP + H(+). The enzyme catalyses CDP-choline + a 1,2-diacyl-sn-glycerol = a 1,2-diacyl-sn-glycero-3-phosphocholine + CMP + H(+). The protein operates within phospholipid metabolism; phosphatidylethanolamine biosynthesis; phosphatidylethanolamine from ethanolamine: step 3/3. It functions in the pathway phospholipid metabolism; phosphatidylcholine biosynthesis; phosphatidylcholine from phosphocholine: step 2/2. Catalyzes both phosphatidylcholine and phosphatidylethanolamine biosynthesis from CDP-choline and CDP-ethanolamine, respectively. Has a higher cholinephosphotransferase activity than ethanolaminephosphotransferase activity. The protein is Choline/ethanolaminephosphotransferase 1 (AAPT1) of Arabidopsis thaliana (Mouse-ear cress).